The primary structure comprises 166 residues: Endoribonuclease YbeY (166 aa).

Histidine 129, histidine 133, and histidine 139 together coordinate Zn(2+).

Belongs to the endoribonuclease YbeY family. It depends on Zn(2+) as a cofactor.

It localises to the cytoplasm. In terms of biological role, single strand-specific metallo-endoribonuclease involved in late-stage 70S ribosome quality control and in maturation of the 3' terminus of the 16S rRNA. The sequence is that of Endoribonuclease YbeY from Mesorhizobium japonicum (strain LMG 29417 / CECT 9101 / MAFF 303099) (Mesorhizobium loti (strain MAFF 303099)).